Reading from the N-terminus, the 66-residue chain is MENEIITVACPTCGSAVIWGEQSPYRPFCSKRCQLIDLGEWANEEKRIASDATHSDSEEWSEVDDR.

Zn(2+) is bound by residues Cys-10, Cys-13, Cys-29, and Cys-33.

This sequence belongs to the DNA gyrase inhibitor YacG family. Interacts with GyrB. Zn(2+) serves as cofactor.

In terms of biological role, inhibits all the catalytic activities of DNA gyrase by preventing its interaction with DNA. Acts by binding directly to the C-terminal domain of GyrB, which probably disrupts DNA binding by the gyrase. The chain is DNA gyrase inhibitor YacG from Edwardsiella ictaluri (strain 93-146).